The chain runs to 227 residues: Ubiquitin-conjugating enzyme E2 6 (227 aa).

The Cytoplasmic portion of the chain corresponds to 1–206; sequence MASKGAYKRL…NSKQSWVKSR (206 aa). One can recognise a UBC core domain in the interval 5-163; that stretch reads GAYKRLMKEY…FPELIDKNRE (159 aa). The active-site Glycyl thioester intermediate is the Cys87. Residues 207–225 form a helical membrane-spanning segment; that stretch reads WSIAVLVFFALALARFFGA.

This sequence belongs to the ubiquitin-conjugating enzyme family.

It is found in the endoplasmic reticulum membrane. The catalysed reaction is S-ubiquitinyl-[E1 ubiquitin-activating enzyme]-L-cysteine + [E2 ubiquitin-conjugating enzyme]-L-cysteine = [E1 ubiquitin-activating enzyme]-L-cysteine + S-ubiquitinyl-[E2 ubiquitin-conjugating enzyme]-L-cysteine.. It functions in the pathway protein modification; protein ubiquitination. In terms of biological role, catalyzes the covalent attachment of ubiquitin to other proteins. Functions in degradation of misfolded or regulated proteins localized in the endoplasmic reticulum (ER) lumen or membrane via the ubiquitin-proteasome system. Cognate E2 conjugating enzyme for the doa10 ubiquitin ligase complex, which is part of the ERAD-C pathway responsible for the rapid degradation of membrane proteins with misfolded cytoplasmic domains. This chain is Ubiquitin-conjugating enzyme E2 6 (ubc6), found in Schizosaccharomyces pombe (strain 972 / ATCC 24843) (Fission yeast).